Consider the following 1073-residue polypeptide: Probable nuclear hormone receptor HR38 (1073 aa).

7 disordered regions span residues 55-87, 150-185, 263-326, 437-458, 492-514, 529-579, and 618-640; these read NLNA…LPPP, TPAP…SNCD, TQTA…LVSP, ALHA…QQHQ, KYNS…APTP, PPLS…NSGG, and GQQQ…NGER. 3 stretches are compositionally biased toward low complexity: residues 59-82, 175-185, and 263-277; these read PTHQ…QQHP, DSNSDSNSNCD, and TQTA…ASAA. Residues 279 to 291 are compositionally biased toward basic residues; the sequence is HHQHHNHLLHQQH. Composition is skewed to low complexity over residues 292-326, 441-458, and 495-514; these read HNQQ…LVSP, QQQQ…QQHQ, and SSSG…APTP. Residues 619–636 are compositionally biased toward low complexity; the sequence is QQQQQQQQSYQQHNYNSH. Positions 741-816 form a DNA-binding region, nuclear receptor; the sequence is SQLCAVCGDT…VGMVKEVVRT (76 aa). NR C4-type zinc fingers lie at residues 744-764 and 780-804; these read CAVC…CEGC and CLAD…FQKC. The tract at residues 819-841 is disordered; that stretch reads LKGRRGRLPSKPKSPQESPPSPP. An NR LBD domain is found at 840-1070; it reads PPISLITALV…ALIENMFVTT (231 aa).

It belongs to the nuclear hormone receptor family. NR4 subfamily. As to quaternary structure, forms a heterodimer with USP. Ubiquitously expressed in preblastoderm embryos, specifically in central nervous system and intestinal tract. Highly expressed in third instar larval imaginal disks and brain complexes, but not in ovaries.

Its subcellular location is the nucleus. Functionally, binds to NGFI-B response elements. Plays an important role in late stages of epidermal metamorphosis. The chain is Probable nuclear hormone receptor HR38 (Hr38) from Drosophila melanogaster (Fruit fly).